The following is a 507-amino-acid chain: uncharacterized protein (507 aa).

3 disordered regions span residues 91 to 162 (NEKT…KKLL), 174 to 255 (EKLQ…QQQQ), and 309 to 422 (KRKL…NYST). The span at 116 to 143 (DSSESDSSESESDSSESESESESNETSE) shows a compositional bias: acidic residues. Low complexity predominate over residues 144–155 (NESSSSSEPESS). Positions 174-193 (EKLQQEQQKQKEAQKPKEKP) are enriched in basic and acidic residues. Composition is skewed to low complexity over residues 194–236 (QQQQ…QQIE), 243–255 (PQQQQQQQQQQQQ), and 313–350 (QSQLDNDGLANKNDNNSNNNNYNNSNNNDSNNNNTNKP). Over residues 351–360 (LSKRQKKLLK) the composition is skewed to basic residues. A compositionally biased stretch (low complexity) spans 378-409 (NNKNDNSTNDSNNNNDNNNNNKNDTNDSNNDD).

This is an uncharacterized protein from Dictyostelium discoideum (Social amoeba).